Reading from the N-terminus, the 292-residue chain is NAD kinase (292 aa).

Asp-73 acts as the Proton acceptor in catalysis. NAD(+) contacts are provided by residues Asp-73–Gly-74, Asn-147–Glu-148, His-158, Arg-175, Asp-177, Thr-188–Ser-193, and Gln-247.

This sequence belongs to the NAD kinase family. The cofactor is a divalent metal cation.

The protein localises to the cytoplasm. It catalyses the reaction NAD(+) + ATP = ADP + NADP(+) + H(+). Functionally, involved in the regulation of the intracellular balance of NAD and NADP, and is a key enzyme in the biosynthesis of NADP. Catalyzes specifically the phosphorylation on 2'-hydroxyl of the adenosine moiety of NAD to yield NADP. The polypeptide is NAD kinase (Erwinia tasmaniensis (strain DSM 17950 / CFBP 7177 / CIP 109463 / NCPPB 4357 / Et1/99)).